The sequence spans 292 residues: Porphobilinogen deaminase (292 aa).

An S-(dipyrrolylmethanemethyl)cysteine modification is found at Cys-235.

This sequence belongs to the HMBS family. As to quaternary structure, monomer. Requires dipyrromethane as cofactor.

It catalyses the reaction 4 porphobilinogen + H2O = hydroxymethylbilane + 4 NH4(+). It participates in porphyrin-containing compound metabolism; protoporphyrin-IX biosynthesis; coproporphyrinogen-III from 5-aminolevulinate: step 2/4. Its function is as follows. Tetrapolymerization of the monopyrrole PBG into the hydroxymethylbilane pre-uroporphyrinogen in several discrete steps. This is Porphobilinogen deaminase from Acetivibrio thermocellus (strain ATCC 27405 / DSM 1237 / JCM 9322 / NBRC 103400 / NCIMB 10682 / NRRL B-4536 / VPI 7372) (Clostridium thermocellum).